The sequence spans 231 residues: Biosynthetic peptidoglycan transglycosylase (231 aa).

The chain crosses the membrane as a helical span at residues 12–32; that stretch reads LLAAFALLLLWQVWLFAQVAW.

Belongs to the glycosyltransferase 51 family.

It localises to the cell inner membrane. It catalyses the reaction [GlcNAc-(1-&gt;4)-Mur2Ac(oyl-L-Ala-gamma-D-Glu-L-Lys-D-Ala-D-Ala)](n)-di-trans,octa-cis-undecaprenyl diphosphate + beta-D-GlcNAc-(1-&gt;4)-Mur2Ac(oyl-L-Ala-gamma-D-Glu-L-Lys-D-Ala-D-Ala)-di-trans,octa-cis-undecaprenyl diphosphate = [GlcNAc-(1-&gt;4)-Mur2Ac(oyl-L-Ala-gamma-D-Glu-L-Lys-D-Ala-D-Ala)](n+1)-di-trans,octa-cis-undecaprenyl diphosphate + di-trans,octa-cis-undecaprenyl diphosphate + H(+). It functions in the pathway cell wall biogenesis; peptidoglycan biosynthesis. Functionally, peptidoglycan polymerase that catalyzes glycan chain elongation from lipid-linked precursors. The protein is Biosynthetic peptidoglycan transglycosylase of Azoarcus sp. (strain BH72).